Reading from the N-terminus, the 510-residue chain is MDIRAAEISAILKDQIKNYGAEAKVSDVGSVLSVGDGIARVYGLDEVKAGELVEFPGGIKGMALNLERDNVGCVIFGDDRGIKEGDTVKRLGSIVDTSVGKGLLGRVVDGLGEPIDGKGPLKGVAERRRVDVKAPGIIPRKSVHEPMATGIKAIDAMIPVGRGQRELIIGDRQTGKTAIALDTILNQKAINEGDDESAKLYCIYVAVGQKRSTVAQIVKTLEENGALDYTIIVAATASDPAPMQFLAPFTACAMAEYFRDNGMHALIVYDDLSKQAVAYRQMSLLLRRPPGREAYPGDVFYLHSRLLERAAKLNEANGSGSMTALPIIETQANDVSAYIPTNVISITDGQIFLETDLFYQGIRPAVNVGLSVSRVGSAAQTKAMKQVAGKMKGELAQYREMAAFAQFGSDLDAATQKLLNRGQRLTELLKQPQFSPLSMEEQVCVIYAGTRGYLDKLPTSDVQRYEADLLRHLHGEHAALLASIRTEKKLTDDSESQLKAALAKFTEHFA.

170-177 (GDRQTGKT) is a binding site for ATP.

The protein belongs to the ATPase alpha/beta chains family. As to quaternary structure, F-type ATPases have 2 components, CF(1) - the catalytic core - and CF(0) - the membrane proton channel. CF(1) has five subunits: alpha(3), beta(3), gamma(1), delta(1), epsilon(1). CF(0) has three main subunits: a(1), b(2) and c(9-12). The alpha and beta chains form an alternating ring which encloses part of the gamma chain. CF(1) is attached to CF(0) by a central stalk formed by the gamma and epsilon chains, while a peripheral stalk is formed by the delta and b chains.

It localises to the cell inner membrane. The enzyme catalyses ATP + H2O + 4 H(+)(in) = ADP + phosphate + 5 H(+)(out). In terms of biological role, produces ATP from ADP in the presence of a proton gradient across the membrane. The alpha chain is a regulatory subunit. The polypeptide is ATP synthase subunit alpha (Maricaulis maris (strain MCS10) (Caulobacter maris)).